A 372-amino-acid chain; its full sequence is tRNA pseudouridine synthase D (372 aa).

The active-site Nucleophile is aspartate 85. Residues 160-330 (GFANYFGYQR…MQGSRRFMWG (171 aa)) form the TRUD domain.

The protein belongs to the pseudouridine synthase TruD family.

The catalysed reaction is uridine(13) in tRNA = pseudouridine(13) in tRNA. Functionally, responsible for synthesis of pseudouridine from uracil-13 in transfer RNAs. The chain is tRNA pseudouridine synthase D from Campylobacter jejuni subsp. jejuni serotype O:6 (strain 81116 / NCTC 11828).